We begin with the raw amino-acid sequence, 90 residues long: Probable Fe(2+)-trafficking protein (90 aa).

It belongs to the Fe(2+)-trafficking protein family.

Functionally, could be a mediator in iron transactions between iron acquisition and iron-requiring processes, such as synthesis and/or repair of Fe-S clusters in biosynthetic enzymes. This is Probable Fe(2+)-trafficking protein from Delftia acidovorans (strain DSM 14801 / SPH-1).